Consider the following 304-residue polypeptide: Ribonuclease Z (304 aa).

7 residues coordinate Zn(2+): histidine 61, histidine 63, aspartate 65, histidine 66, histidine 138, aspartate 206, and histidine 265. Aspartate 65 functions as the Proton acceptor in the catalytic mechanism.

The protein belongs to the RNase Z family. In terms of assembly, homodimer. The cofactor is Zn(2+).

It carries out the reaction Endonucleolytic cleavage of RNA, removing extra 3' nucleotides from tRNA precursor, generating 3' termini of tRNAs. A 3'-hydroxy group is left at the tRNA terminus and a 5'-phosphoryl group is left at the trailer molecule.. Its function is as follows. Zinc phosphodiesterase, which displays some tRNA 3'-processing endonuclease activity. Probably involved in tRNA maturation, by removing a 3'-trailer from precursor tRNA. The chain is Ribonuclease Z from Lachnoclostridium phytofermentans (strain ATCC 700394 / DSM 18823 / ISDg) (Clostridium phytofermentans).